The chain runs to 156 residues: ATP synthase subunit b (156 aa).

Residues 11-31 traverse the membrane as a helical segment; that stretch reads AIAFILFVAFCMKYVWPPLMA.

This sequence belongs to the ATPase B chain family. In terms of assembly, F-type ATPases have 2 components, F(1) - the catalytic core - and F(0) - the membrane proton channel. F(1) has five subunits: alpha(3), beta(3), gamma(1), delta(1), epsilon(1). F(0) has three main subunits: a(1), b(2) and c(10-14). The alpha and beta chains form an alternating ring which encloses part of the gamma chain. F(1) is attached to F(0) by a central stalk formed by the gamma and epsilon chains, while a peripheral stalk is formed by the delta and b chains.

The protein resides in the cell inner membrane. Functionally, f(1)F(0) ATP synthase produces ATP from ADP in the presence of a proton or sodium gradient. F-type ATPases consist of two structural domains, F(1) containing the extramembraneous catalytic core and F(0) containing the membrane proton channel, linked together by a central stalk and a peripheral stalk. During catalysis, ATP synthesis in the catalytic domain of F(1) is coupled via a rotary mechanism of the central stalk subunits to proton translocation. Its function is as follows. Component of the F(0) channel, it forms part of the peripheral stalk, linking F(1) to F(0). In Erwinia tasmaniensis (strain DSM 17950 / CFBP 7177 / CIP 109463 / NCPPB 4357 / Et1/99), this protein is ATP synthase subunit b.